Reading from the N-terminus, the 440-residue chain is RUN domain-containing protein 3A (440 aa).

One can recognise an RUN domain in the interval Asp52 to Glu184. The disordered stretch occupies residues Asp213 to Leu233. The stretch at Tyr262–Leu317 forms a coiled coil. The tract at residues Leu374–Leu402 is disordered.

It belongs to the RUNDC3 family.

The polypeptide is RUN domain-containing protein 3A (rundc3a) (Xenopus tropicalis (Western clawed frog)).